The primary structure comprises 833 residues: Probable glucan 1,3-beta-glucosidase D (833 aa).

The span at Met-1–Thr-33 shows a compositional bias: basic and acidic residues. The tract at residues Met-1–Val-228 is disordered. Topologically, residues Met-1 to Arg-305 are cytoplasmic. Over residues Asp-34–Glu-45 the composition is skewed to acidic residues. Composition is skewed to basic and acidic residues over residues His-46 to Glu-75 and Tyr-97 to Ala-172. Positions Ser-183–Leu-196 are enriched in low complexity. The segment covering Tyr-200–Ala-217 has biased composition (basic and acidic residues). Residues Trp-306–Val-326 traverse the membrane as a helical; Signal-anchor for type II membrane protein segment. At Ser-327–Tyr-833 the chain is on the extracellular side. Positions Asp-331–Ser-353 are disordered. N-linked (GlcNAc...) asparagine glycosylation is present at Asn-332. The segment covering Ala-337–Lys-346 has biased composition (polar residues). N-linked (GlcNAc...) asparagine glycosylation is found at Asn-378, Asn-383, Asn-395, Asn-548, Asn-560, and Asn-569. Glu-599 acts as the Proton donor in catalysis. Asn-638, Asn-671, and Asn-691 each carry an N-linked (GlcNAc...) asparagine glycan. The active-site Nucleophile is Glu-704.

The protein belongs to the glycosyl hydrolase 5 (cellulase A) family.

It localises to the cell membrane. It catalyses the reaction Successive hydrolysis of beta-D-glucose units from the non-reducing ends of (1-&gt;3)-beta-D-glucans, releasing alpha-glucose.. Functionally, glucosidase involved in the degradation of cellulosic biomass. Active on lichenan. The chain is Probable glucan 1,3-beta-glucosidase D (exgD) from Aspergillus fumigatus (strain CBS 144.89 / FGSC A1163 / CEA10) (Neosartorya fumigata).